We begin with the raw amino-acid sequence, 954 residues long: E3 ubiquitin-protein ligase MIB2 (954 aa).

The MIB/HERC2 1 domain occupies 1–80 (MDLDPYASMQ…AYDLLLYDNA (80 aa)). The ZZ-type zinc finger occupies 86–138 (HPNIICDCCKKHGIRGMRWKCKMCFDYDLCTQCYMNNKHDLSHAFERYETAHS). Residues C91, C94, C106, C109, C115, C118, H124, and H128 each coordinate Zn(2+). Residues 149 to 227 (LTRITLKGTF…KVDLKCTVEA (79 aa)) form the MIB/HERC2 2 domain. ANK repeat units follow at residues 464–493 (QGRTALQIASYQGHLDVVKILLQAHATVNL), 497–526 (EGDTALHYAAFGNQADVARVLMAKGAGADL), 530–559 (AKCTALYVAVSQGFTEVVQALCELNCDVNL), 563–591 (HGDTPLHYAITADYKVIIEILTEVPNIDF), 597–626 (QGFNLLHYSALKGNKLAIKKILARARQLVD), 631–661 (DGFTALHLAALNNHKEVAEILIKEGRCDVNV), 665–694 (RNQTPLHLAIIQGHVGLVQLLVSEGSDVNA), 698–726 (DGDTAMHIALERQQLMSVLMEKREGEMGS), and 766–795 (RGKSPLDLITDGRIVQIIKDFSQKFREQQV). 2 RING-type zinc fingers span residues 830-865 (CLVCSELALLIHFFPCQHSIVCEECSRRMKKCIKCQ) and 910-943 (CPICIDDQIKLVFQCGHGSCPDCSTALTVCPICR).

The protein resides in the cytoplasm. The catalysed reaction is S-ubiquitinyl-[E2 ubiquitin-conjugating enzyme]-L-cysteine + [acceptor protein]-L-lysine = [E2 ubiquitin-conjugating enzyme]-L-cysteine + N(6)-ubiquitinyl-[acceptor protein]-L-lysine.. It functions in the pathway protein modification; protein ubiquitination. Its function is as follows. E3 ubiquitin-protein ligase that mediates ubiquitination of Delta receptors, which act as ligands of Notch proteins. Positively regulates the Delta-mediated Notch signaling by ubiquitinating the intracellular domain of Delta, leading to endocytosis of Delta receptors. The chain is E3 ubiquitin-protein ligase MIB2 (MIB2) from Gallus gallus (Chicken).